The chain runs to 1207 residues: DNA-directed RNA polymerase subunit beta' (1207 aa).

Zn(2+) is bound by residues C60, C62, C75, and C78. D450, D452, and D454 together coordinate Mg(2+). C819, C893, C900, and C903 together coordinate Zn(2+).

It belongs to the RNA polymerase beta' chain family. The RNAP catalytic core consists of 2 alpha, 1 beta, 1 beta' and 1 omega subunit. When a sigma factor is associated with the core the holoenzyme is formed, which can initiate transcription. Requires Mg(2+) as cofactor. It depends on Zn(2+) as a cofactor.

The catalysed reaction is RNA(n) + a ribonucleoside 5'-triphosphate = RNA(n+1) + diphosphate. Functionally, DNA-dependent RNA polymerase catalyzes the transcription of DNA into RNA using the four ribonucleoside triphosphates as substrates. The polypeptide is DNA-directed RNA polymerase subunit beta' (Streptococcus pyogenes serotype M3 (strain ATCC BAA-595 / MGAS315)).